The chain runs to 216 residues: MOB kinase activator 3C (216 aa).

The Zn(2+) site is built by Cys82, Cys87, His164, and His169.

It belongs to the MOB1/phocein family.

In terms of biological role, may regulate the activity of kinases. The polypeptide is MOB kinase activator 3C (Mob3c) (Mus musculus (Mouse)).